Consider the following 365-residue polypeptide: Selina-4(15),7(11)-diene synthase ((2E,6E)-farnesyl diphosphate cyclizing) (365 aa).

Mg(2+) is bound by residues Asp82 and Glu87. Positions 82–87 (DDGHCE) match the DDXXXE motif motif. Arg178 lines the substrate pocket. Asn224 and Ser228 together coordinate Mg(2+). Lys231 provides a ligand contact to substrate. A Mg(2+)-binding site is contributed by Glu232. A substrate-binding site is contributed by 310 to 311 (RY).

Belongs to the terpene synthase family. Monomer. Mg(2+) is required as a cofactor.

It catalyses the reaction (2E,6E)-farnesyl diphosphate = selina-4(15),7(11)-diene + diphosphate. It participates in secondary metabolite biosynthesis; terpenoid biosynthesis. Its function is as follows. Catalyzes the conversion of (2E,6E)-farnesyl diphosphate (FPP) to yield the bicyclic sesquiterpene selina-4(15),7(11)-diene via a 1,10-cyclization, which requires the abstraction of the pyrophosphate from FPP leading to a (E,E)-germacradienyl cation. The only accepted substrate is (2E,6E)-farnesyl diphosphate (FPP). In Streptomyces pristinaespiralis (strain ATCC 25486 / DSM 40338 / CBS 914.69 / JCM 4507 / KCC S-0507 / NBRC 13074 / NRRL 2958 / 5647), this protein is Selina-4(15),7(11)-diene synthase ((2E,6E)-farnesyl diphosphate cyclizing).